Reading from the N-terminus, the 227-residue chain is Large ribosomal subunit protein uL3 (227 aa).

The disordered stretch occupies residues 129–154 (GMQPVSHGQSDRTRSRGSSGAQGPQK).

Belongs to the universal ribosomal protein uL3 family. In terms of assembly, part of the 50S ribosomal subunit. Forms a cluster with proteins L14 and L19.

In terms of biological role, one of the primary rRNA binding proteins, it binds directly near the 3'-end of the 23S rRNA, where it nucleates assembly of the 50S subunit. The sequence is that of Large ribosomal subunit protein uL3 from Endomicrobium trichonymphae.